Here is a 730-residue protein sequence, read N- to C-terminus: Envelope glycoprotein H (730 aa).

Positions 1 to 21 (MQGLAFLAALACWRCISLTCG) are cleaved as a signal peptide. Over 22–706 (ATGALPTTAT…MYRRRAASAL (685 aa)) the chain is Virion surface. N-linked (GlcNAc...) asparagine; by host glycosylation is found at Asn46, Asn54, Asn101, Asn125, Asn131, Asn188, Asn209, Asn215, Asn267, Asn274, Asn365, Asn556, Asn613, Asn626, and Asn688. Residues 190–254 (SGVALYGVVS…RNAKYALVAI (65 aa)) form an interaction with gL region. The helical transmembrane segment at 707–727 (FLILSFIGFSGVIYFLYRLFS) threads the bilayer. Topologically, residues 728–730 (ILY) are intravirion.

The protein belongs to the herpesviridae glycoprotein H family. Interacts with glycoprotein L (gL); this interaction is necessary for the correct processing and cell surface expression of gH. The heterodimer gH/gL seems to interact with gB trimers during fusion. When in complex with gL, interacts with host EPHA2; this interaction triggers EPHA2 phosphorylation and endocytosis allowing KSHV entry. In terms of processing, N-glycosylated, O-glycosylated, and sialylated.

The protein localises to the virion membrane. Its subcellular location is the host cell membrane. It localises to the host endosome membrane. In terms of biological role, the heterodimer glycoprotein H-glycoprotein L is required for the fusion of viral and plasma membranes leading to virus entry into the host cell. Following initial binding to host receptor, membrane fusion is mediated by the fusion machinery composed of gB and the heterodimer gH/gL. May also be involved in the fusion between the virion envelope and the outer nuclear membrane during virion morphogenesis. Targets host EPHA2 to promote KSHV entry. The polypeptide is Envelope glycoprotein H (Homo sapiens (Human)).